The sequence spans 238 residues: 2,3,4,5-tetrahydropyridine-2,6-dicarboxylate N-acetyltransferase (238 aa).

Belongs to the transferase hexapeptide repeat family. DapH subfamily.

It catalyses the reaction (S)-2,3,4,5-tetrahydrodipicolinate + acetyl-CoA + H2O = L-2-acetamido-6-oxoheptanedioate + CoA. Its pathway is amino-acid biosynthesis; L-lysine biosynthesis via DAP pathway; LL-2,6-diaminopimelate from (S)-tetrahydrodipicolinate (acetylase route): step 1/3. Functionally, catalyzes the transfer of an acetyl group from acetyl-CoA to tetrahydrodipicolinate. The chain is 2,3,4,5-tetrahydropyridine-2,6-dicarboxylate N-acetyltransferase from Pseudothermotoga lettingae (strain ATCC BAA-301 / DSM 14385 / NBRC 107922 / TMO) (Thermotoga lettingae).